We begin with the raw amino-acid sequence, 241 residues long: 3-deoxy-manno-octulosonate cytidylyltransferase (241 aa).

The protein belongs to the KdsB family.

It localises to the cytoplasm. It carries out the reaction 3-deoxy-alpha-D-manno-oct-2-ulosonate + CTP = CMP-3-deoxy-beta-D-manno-octulosonate + diphosphate. Its pathway is nucleotide-sugar biosynthesis; CMP-3-deoxy-D-manno-octulosonate biosynthesis; CMP-3-deoxy-D-manno-octulosonate from 3-deoxy-D-manno-octulosonate and CTP: step 1/1. It participates in bacterial outer membrane biogenesis; lipopolysaccharide biosynthesis. Functionally, activates KDO (a required 8-carbon sugar) for incorporation into bacterial lipopolysaccharide in Gram-negative bacteria. The chain is 3-deoxy-manno-octulosonate cytidylyltransferase from Rickettsia typhi (strain ATCC VR-144 / Wilmington).